An 873-amino-acid chain; its full sequence is Probable beta-glucosidase A (873 aa).

An N-terminal signal peptide occupies residues 1-19; it reads MRFGWLEVAALTAASVANA. Asparagine 71, asparagine 222, and asparagine 263 each carry an N-linked (GlcNAc...) asparagine glycan. Residue aspartate 291 is part of the active site. 9 N-linked (GlcNAc...) asparagine glycosylation sites follow: asparagine 326, asparagine 333, asparagine 365, asparagine 453, asparagine 534, asparagine 553, asparagine 575, asparagine 679, and asparagine 725. Residues 731 to 764 are disordered; the sequence is DSSDDPNYGWQDSEYIPEGARDGSPQPLLKAGGA.

This sequence belongs to the glycosyl hydrolase 3 family.

Its subcellular location is the secreted. It catalyses the reaction Hydrolysis of terminal, non-reducing beta-D-glucosyl residues with release of beta-D-glucose.. The protein operates within glycan metabolism; cellulose degradation. In terms of biological role, beta-glucosidases are one of a number of cellulolytic enzymes involved in the degradation of cellulosic biomass. Catalyzes the last step releasing glucose from the inhibitory cellobiose. This Aspergillus fumigatus (strain ATCC MYA-4609 / CBS 101355 / FGSC A1100 / Af293) (Neosartorya fumigata) protein is Probable beta-glucosidase A (bglA).